Consider the following 531-residue polypeptide: Transcription factor LG2 (531 aa).

2 disordered regions span residues 115–154 (RHQQ…ASSA) and 195–220 (LHGG…KLVD). Positions 116–154 (HQQQLHSGNSQSVGSTGTDSSSAQNTMSQMELVSPASSA) are enriched in polar residues. The 45-residue stretch at 220–264 (DAKTERRLAQNREAARKSRLRKKAYVQQLETSRIRLQQVEHELQR) folds into the bZIP domain. The segment at 222 to 242 (KTERRLAQNREAARKSRLRKK) is basic motif. Positions 224–231 (ERRLAQNR) match the Nuclear localization signal motif. Residues 248–262 (LETSRIRLQQVEHEL) form a leucine-zipper region. In terms of domain architecture, DOG1 spans 285 to 499 (AAMFDMEYAR…RALSNLWASR (215 aa)).

Belongs to the bZIP family. As to quaternary structure, binds DNA as a dimer. As to expression, expression in meristem/developing ligule regions.

Its subcellular location is the nucleus. In terms of biological role, required for the formation of the blade-sheath boundary in leaves. Promotes flowering. This is Transcription factor LG2 from Zea mays (Maize).